The chain runs to 338 residues: Ketol-acid reductoisomerase (NADP(+)) (338 aa).

A KARI N-terminal Rossmann domain is found at 1-181 (MQVYYDKDCD…GGGRTGIIET (181 aa)). NADP(+)-binding positions include 24–27 (FGSQ), R47, S50, S52, and 82–85 (DEFQ). H107 is a catalytic residue. NADP(+) is bound at residue G133. Positions 182-327 (TFKDETETDL…EKLRSMMPWI (146 aa)) constitute a KARI C-terminal knotted domain. Mg(2+)-binding residues include D190, E194, E226, and E230. Position 251 (S251) interacts with substrate.

Belongs to the ketol-acid reductoisomerase family. Mg(2+) is required as a cofactor.

It catalyses the reaction (2R)-2,3-dihydroxy-3-methylbutanoate + NADP(+) = (2S)-2-acetolactate + NADPH + H(+). The catalysed reaction is (2R,3R)-2,3-dihydroxy-3-methylpentanoate + NADP(+) = (S)-2-ethyl-2-hydroxy-3-oxobutanoate + NADPH + H(+). Its pathway is amino-acid biosynthesis; L-isoleucine biosynthesis; L-isoleucine from 2-oxobutanoate: step 2/4. It functions in the pathway amino-acid biosynthesis; L-valine biosynthesis; L-valine from pyruvate: step 2/4. Its function is as follows. Involved in the biosynthesis of branched-chain amino acids (BCAA). Catalyzes an alkyl-migration followed by a ketol-acid reduction of (S)-2-acetolactate (S2AL) to yield (R)-2,3-dihydroxy-isovalerate. In the isomerase reaction, S2AL is rearranged via a Mg-dependent methyl migration to produce 3-hydroxy-3-methyl-2-ketobutyrate (HMKB). In the reductase reaction, this 2-ketoacid undergoes a metal-dependent reduction by NADPH to yield (R)-2,3-dihydroxy-isovalerate. The chain is Ketol-acid reductoisomerase (NADP(+)) from Marinobacter nauticus (strain ATCC 700491 / DSM 11845 / VT8) (Marinobacter aquaeolei).